The sequence spans 322 residues: Sideroflexin-1 (322 aa).

The residue at position 2 (Ser-2) is an N-acetylserine. Residues 2 to 102 (SGELPPNINI…MSAQVPMNMT (101 aa)) lie on the Mitochondrial matrix side of the membrane. The helical transmembrane segment at 103-120 (ITGCMMTFYRTTPAVLFW) threads the bilayer. At 121 to 146 (QWINQSFNAVVNYTNRSGDAPLTVNE) the chain is on the mitochondrial intermembrane side. A helical transmembrane segment spans residues 147-167 (LGTAYVSATTGAVATALGLNA). Residues 168-174 (LTKHVSP) are Mitochondrial matrix-facing. A helical transmembrane segment spans residues 175–195 (LIGRFVPFAAVAAANCINIPL). Over 196-228 (MRQRELKVGIPVTDENGNRLGESANAAKQAITQ) the chain is Mitochondrial intermembrane. Residues 229–249 (VVVSRILMAAPGMAIPPFIMN) form a helical membrane-spanning segment. At 250–266 (TLEKKAFLKRFPWMSAP) the chain is on the mitochondrial matrix side. The helical transmembrane segment at 267 to 287 (VQVGIVGFCLVFATPLCCALF) threads the bilayer. The Mitochondrial intermembrane segment spans residues 288–322 (PQKSSMSVTSLEAELQARIRETYPELRRVYFNKGL).

Belongs to the sideroflexin family.

It is found in the mitochondrion inner membrane. It catalyses the reaction L-serine(in) = L-serine(out). The enzyme catalyses L-alanine(in) = L-alanine(out). It carries out the reaction L-cysteine(in) = L-cysteine(out). Functionally, amino acid transporter importing serine, an essential substrate of the mitochondrial branch of the one-carbon pathway, into mitochondria. Mitochondrial serine is then converted to glycine and formate, which exits to the cytosol where it is used to generate the charged folates that serve as one-carbon donors. May also transport other amino acids including alanine and cysteine. The chain is Sideroflexin-1 (SFXN1) from Bos taurus (Bovine).